A 626-amino-acid chain; its full sequence is Chaperone protein HtpG (626 aa).

Residues 1-338 are a; substrate-binding; sequence MTANKNQKKT…SNDLPLNVSR (338 aa). The interval 339-553 is b; sequence EILQDHKLVY…SNEMSTQMAK (215 aa). Residues 554–626 are c; that stretch reads LFSAAGQTVP…ARINDLLINN (73 aa).

This sequence belongs to the heat shock protein 90 family. In terms of assembly, homodimer.

It is found in the cytoplasm. Its function is as follows. Molecular chaperone. Has ATPase activity. This chain is Chaperone protein HtpG, found in Buchnera aphidicola subsp. Baizongia pistaciae (strain Bp).